We begin with the raw amino-acid sequence, 860 residues long: Leucine--tRNA ligase (860 aa).

Positions 42–52 (PYPSGRLHMGH) match the 'HIGH' region motif. A 'KMSKS' region motif is present at residues 619 to 623 (KMSKS). Residue K622 participates in ATP binding.

It belongs to the class-I aminoacyl-tRNA synthetase family.

Its subcellular location is the cytoplasm. It catalyses the reaction tRNA(Leu) + L-leucine + ATP = L-leucyl-tRNA(Leu) + AMP + diphosphate. The sequence is that of Leucine--tRNA ligase from Escherichia coli O9:H4 (strain HS).